We begin with the raw amino-acid sequence, 1939 residues long: MASPDAEMAAFGEAAPYLRKSEKERIEAQNKPFDAKSSVFVVHPKESFVKGTIQSKEGGKVTVKTEGGETLTVKEDQVFSMNPPKYDKIEDMAMMTHLHEPAVLYNLKERYAAWMIYTYSGLFCVTVNPYKWLPVYNPEVVLAYRGKKRQEAPPHIFSISDNAYQFMLTDRENQSILITGESGAGKTVNTKRVIQYFATIAASGEKKKEEQSGKMQGTLEDQIISANPLLEAFGNAKTVRNDNSSRFGKFIRIHFGATGKLASADIETYLLEKSRVTFQLPAERSYHIFYQIMSNKKPELIDMLLITTNPYDYHYVSQGEITVPSIDDQEELMATDSAIDILGFSADEKTAIYKLTGAVMHYGNLKFKQKQREEQAEPDGTEVADKAAYLMGLNSAELLKALCYPRVKVGNEFVTKGQTVSQVHNSVGALAKAVYEKMFLWMVIRINQQLDTKQPRQYFIGVLDIAGFEIFDFNSFEQLCINFTNEKLQQFFNHHMFVLEQEEYKKEGIEWEFIDFGMDLAACIELIEKPMGIFSILEEECMFPKATDTSFKNKLYDQHLGKSNNFQKPKPAKGKAEAHFSLVHYAGTVDYNISGWLEKNKDPLNETVIGLYQKSSVKTLALLFATYGGEAEGGGGKKGGKKKGSSFQTVSALFRENLNKLMANLRSTHPHFVRCIIPNETKTPGAMEHELVLHQLRCNGVLEGIRICRKGFPSRVLYADFKQRYRVLNASAIPEGQFMDSKKASEKLLGSIDVDHTQYRFGHTKVFFKAGLLGLLEEMRDDKLAEIITRTQARCRGFLMRVEYRRMVERRESIFCIQYNVRSFMNVKHWPWMKLFFKIKPLLKSAESEKEMANMKEEFEKTKEELAKSEAKRKELEEKMVVLLQEKNDLQLQVQAEADSLADAEERCDQLIKTKIQLEAKIKEVTERAEDEEEINAELTAKKRKLEDECSELKKDIDDLELTLAKVEKEKHATENKVKNLTEEMAVLDETIAKLTKEKKALQEAHQQTLDDLQVEEDKVNTLTKAKTKLEQQVDDLEGSLEQEKKLRMDLERAKRKLEGDLKLAHDSIMDLENDKQQLDEKLKKKDFEISQIQSKIEDEQALGMQLQKKIKELQARIEELEEEIEAERTSRAKAEKHRADLSRELEEISERLEEAGGATAAQIEMNKKREAEFQKMRRDLEEATLQHEATAAALRKKHADSTAELGEQIDNLQRVKQKLEKEKSELKMEIDDLASNMESVSKAKANLEKMCRTLEDQLSEIKTKEEQNQRMINDLNTQRARLQTETGEYSRQAEEKDALISQLSRGKQGFTQQIEELKRHLEEEIKAKNALAHALQSARHDCELLREQYEEEQEAKGELQRALSKANSEVAQWRTKYETDAIQRTEELEEAKKKLAQRLQDAEEHVEAVNAKCASLEKTKQRLQNEVEDLMVDVERSNAACAALDKKQKNFDKILAEWKQKYEETQTELEASQKESRSLSTELFKMKNAYEESLDHLETLKRENKNLQQEIADLTEQIAEGGKAVHELEKVKKHVEQEKSELQASLEEAEASLEHEEGKILRLQLELNQIKSEIDRKIAEKDEEIDQLKRNHLRIVESMQSTLDAEIRSRNEALRLKKKMEGDLNEMEIQLSHANRMAAEAQKNLRNTQGTLKDTQIHLDDALRTQEDLKEQVAMVERRANLLQAEVEELRGALEQTERSRKVAEQELLDATERVQLLHTQNTSLINTKKKLETDIVQIQSEMEDTIQEARNAEEKAKKAITDAAMMAEELKKEQDTSAHLERMKKNMDQTVKDLHVRLDEAEQLALKGGKKQLQKLEARVRELEGEVDSEQKRSAEAVKGVRKYERRVKELTYQCEEDRKNILRLQDLVDKLQMKVKSYKRQAEEAEELSNVNLSKFRKIQHELEEAEERADIAESQVNKLRVKSREIHGKKIEEEE.

The residue at position 2 (A2) is an N-acetylalanine. Positions 34–83 (DAKSSVFVVHPKESFVKGTIQSKEGGKVTVKTEGGETLTVKEDQVFSMNP) constitute a Myosin N-terminal SH3-like domain. An N6-methyllysine modification is found at K36. Positions 87-781 (DKIEDMAMMT…LLGLLEEMRD (695 aa)) constitute a Myosin motor domain. K131 is subject to N6,N6,N6-trimethyllysine. 180-187 (GESGAGKT) serves as a coordination point for ATP. K552 carries the post-translational modification N6,N6,N6-trimethyllysine. Residues 658 to 680 (LNKLMANLRSTHPHFVRCIIPNE) are actin-binding. H756 bears the Pros-methylhistidine mark. The actin-binding stretch occupies residues 760–774 (RFGHTKVFFKAGLLG). One can recognise an IQ domain in the interval 784–813 (LAEIITRTQARCRGFLMRVEYRRMVERRES). The hinge stretch occupies residues 839 to 841 (IKP). Residues 842-1939 (LLKSAESEKE…IHGKKIEEEE (1098 aa)) are a coiled coil.

Belongs to the TRAFAC class myosin-kinesin ATPase superfamily. Myosin family. Muscle myosin is a hexameric protein that consists of 2 heavy chain subunits (MHC), 2 alkali light chain subunits (MLC) and 2 regulatory light chain subunits (MLC-2).

Its subcellular location is the cytoplasm. It localises to the myofibril. Its function is as follows. Muscle contraction. Myosin is a protein that binds to F-actin and has ATPase activity that is activated by F-actin. This Gallus gallus (Chicken) protein is Myosin heavy chain, skeletal muscle, adult.